A 368-amino-acid polypeptide reads, in one-letter code: tRNA-specific 2-thiouridylase MnmA (368 aa).

Residues 11–18 (GMSGGVDS) and Met-37 contribute to the ATP site. The interval 97–99 (NPD) is interaction with target base in tRNA. Cys-102 serves as the catalytic Nucleophile. Residues Cys-102 and Cys-199 are joined by a disulfide bond. Gly-127 lines the ATP pocket. Positions 149–151 (KDQ) are interaction with tRNA. Catalysis depends on Cys-199, which acts as the Cysteine persulfide intermediate. The interaction with tRNA stretch occupies residues 311-312 (RY).

The protein belongs to the MnmA/TRMU family. Interacts with TusE.

It localises to the cytoplasm. It carries out the reaction S-sulfanyl-L-cysteinyl-[protein] + uridine(34) in tRNA + AH2 + ATP = 2-thiouridine(34) in tRNA + L-cysteinyl-[protein] + A + AMP + diphosphate + H(+). Functionally, catalyzes the 2-thiolation of uridine at the wobble position (U34) of tRNA(Lys), tRNA(Glu) and tRNA(Gln), leading to the formation of s(2)U34, the first step of tRNA-mnm(5)s(2)U34 synthesis. Sulfur is provided by IscS, via a sulfur-relay system. Binds ATP and its substrate tRNAs. The chain is tRNA-specific 2-thiouridylase MnmA from Shigella dysenteriae serotype 1 (strain Sd197).